Reading from the N-terminus, the 507-residue chain is Ribose import ATP-binding protein RbsA 2 (507 aa).

2 ABC transporter domains span residues 7 to 245 (FSLD…VGRN) and 249 to 498 (LFTR…MPQS). 39–46 (GENGAGKS) is an ATP binding site.

This sequence belongs to the ABC transporter superfamily. Ribose importer (TC 3.A.1.2.1) family. The complex is composed of an ATP-binding protein (RbsA), two transmembrane proteins (RbsC) and a solute-binding protein (RbsB).

The protein resides in the cell inner membrane. It carries out the reaction D-ribose(out) + ATP + H2O = D-ribose(in) + ADP + phosphate + H(+). Its function is as follows. Part of the ABC transporter complex RbsABC involved in ribose import. Responsible for energy coupling to the transport system. The chain is Ribose import ATP-binding protein RbsA 2 from Mesorhizobium japonicum (strain LMG 29417 / CECT 9101 / MAFF 303099) (Mesorhizobium loti (strain MAFF 303099)).